The sequence spans 483 residues: Regulatory protein ViaA (483 aa).

It belongs to the ViaA family. In terms of assembly, homodimer. Interacts with RavA.

The protein resides in the cytoplasm. Functionally, component of the RavA-ViaA chaperone complex, which may act on the membrane to optimize the function of some of the respiratory chains. ViaA stimulates the ATPase activity of RavA. In Salmonella agona (strain SL483), this protein is Regulatory protein ViaA.